The sequence spans 186 residues: piRNA-mediated silencing protein C19orf84 (186 aa).

2 disordered regions span residues 1-42 (MEQP…NSTD) and 89-186 (SQAG…ETEY). The segment covering 13–22 (NNLSLPSSGT) has biased composition (polar residues). Over residues 24-36 (PWPPAPLPAPPPL) the composition is skewed to pro residues. Positions 114-126 (RPGWGRGLHRRGL) are enriched in basic residues. Pro residues predominate over residues 145–157 (RTPPMTLPSPPTL).

Interacts with SPOCD1.

The protein resides in the nucleus. Its subcellular location is the nucleoplasm. In terms of biological role, protein adapter involved in piRNA-directed transposon methylation by connecting PIWIL4-piRNA and DNA methylation machineries. The PIWIL4-piRNA pathway plays a central role during spermatogenesis by directing transposon DNA methylation and silencing, thereby preventing their mobilization, which is essential for the germline integrity. The chain is piRNA-mediated silencing protein C19orf84 from Homo sapiens (Human).